Reading from the N-terminus, the 598-residue chain is Probable translation initiation factor IF-2 (598 aa).

The tr-type G domain maps to L3–E223. The interval G12–T19 is G1. GTP is bound at residue G12–T19. Residues G37–H41 form a G2 region. Residues D76–G79 form a G3 region. Residues D76–H80 and N130–D133 each bind GTP. A G4 region spans residues N130 to D133. The tract at residues S200 to M202 is G5.

Belongs to the TRAFAC class translation factor GTPase superfamily. Classic translation factor GTPase family. IF-2 subfamily.

Its function is as follows. Function in general translation initiation by promoting the binding of the formylmethionine-tRNA to ribosomes. Seems to function along with eIF-2. This chain is Probable translation initiation factor IF-2, found in Methanococcus aeolicus (strain ATCC BAA-1280 / DSM 17508 / OCM 812 / Nankai-3).